The primary structure comprises 831 residues: Sodium/hydrogen exchanger 3 (831 aa).

Positions 1-28 are cleaved as a signal peptide; sequence MWHPALGPGWKPLLALALALTSLRGVRG. The Extracellular segment spans residues 29–48; that stretch reads IEEEPNSGGSFQIVTFKWHH. A helical transmembrane segment spans residues 49-71; it reads VQDPYIIALWILVASLAKIVFHL. Over 72 to 79 the chain is Cytoplasmic; sequence SHKVTSVV. Residues 80 to 99 form a helical membrane-spanning segment; that stretch reads PESALLIVLGLVLGGIVWAA. Over 100–108 the chain is Extracellular; the sequence is DHIASFTLT. Residues 109-126 traverse the membrane as a helical segment; it reads PTLFFFYLLPPIVLDAGY. At 127-129 the chain is on the cytoplasmic side; the sequence is FMP. The helical transmembrane segment at 130–165 threads the bilayer; the sequence is NRLFFGNLGTILLYAVIGTIWNAATTGLSLYGVFLS. A 1,2-diacyl-sn-glycero-3-phospho-(1D-myo-inositol) is bound by residues G135, G138, and T139. Residues 166 to 178 lie on the Extracellular side of the membrane; sequence GLMGELKIGLLDF. A helical membrane pass occupies residues 179–200; the sequence is LLFGSLIAAVDPVAVLAVFEEV. Topologically, residues 201–202 are cytoplasmic; it reads HV. Residues 203–234 traverse the membrane as a helical segment; that stretch reads NEVLFIIVFGESLLNDAVTVVLYNVFESFVTL. Residues 235-241 lie on the Extracellular side of the membrane; it reads GGDAVTG. Residues 242–276 traverse the membrane as a helical segment; sequence VDCVKGIVSFFVVSLGGTLVGVIFAFLLSLVTRFT. At 277–278 the chain is on the cytoplasmic side; that stretch reads KH. The chain crosses the membrane as a helical span at residues 279 to 301; the sequence is VRIIEPGFVFVISYLSYLTSEML. At 302-303 the chain is on the extracellular side; it reads SL. The helical transmembrane segment at 304-320 threads the bilayer; it reads SAILAITFCGICCQKYV. The Cytoplasmic segment spans residues 321–327; that stretch reads KANISEQ. A helical transmembrane segment spans residues 328 to 356; the sequence is SATTVRYTMKMLASGAETIIFMFLGISAV. Residues 357-364 are Extracellular-facing; the sequence is DPVIWTWN. The helical transmembrane segment at 365-386 threads the bilayer; that stretch reads TAFVLLTLVFISVYRAIGVVLQ. Over 387-399 the chain is Cytoplasmic; sequence TWILNRYRMVQLE. M395 lines the a 1,2-diacyl-sn-glycero-3-phospho-(1D-myo-inositol) pocket. Residues 400–423 form a helical membrane-spanning segment; that stretch reads TIDQVVMSYGGLRGAVAYALVVLL. Over 424-430 the chain is Extracellular; sequence DEKKVKE. A helical transmembrane segment spans residues 431-464; sequence KNLFVSTTLIVVFFTVIFQGLTIKPLVQWLKVKR. Residues 465-831 lie on the Cytoplasmic side of the membrane; it reads SEQREPKLNE…QPASPESTHM (367 aa). 3 residues coordinate a 1,2-diacyl-sn-glycero-3-phospho-(1D-myo-inositol): Q494, I495, and H497. A phosphoserine mark is found at S552 and S560. The interaction with EZR stretch occupies residues 573 to 587; it reads RPSTVEASVSYFLRE. Residues 588-665 are interaction with NHERF4; the sequence is NVSAVCLDMQ…RKRLESFKSA (78 aa). The interaction with AHCYL1 stretch occupies residues 589-693; sequence VSAVCLDMQS…AQKRRNSSIP (105 aa). Phosphoserine occurs at positions 590 and 605. S661 is subject to Phosphoserine; by SGK1. Phosphoserine occurs at positions 716, 807, and 810. The interval 808 to 831 is disordered; it reads VDSFLQADGPEEQLQPASPESTHM. Residues 822-831 show a composition bias toward polar residues; the sequence is QPASPESTHM.

Belongs to the monovalent cation:p,roton antiporter 1 (CPA1) transporter (TC 2.A.36) family. Homodimer. Found in the forms of complex and dynamic macromolecular complexes. Binds NHERF1 and NHERF2. Interacts with NHERF4 and interactions decrease in response to elevated calcium ion levels. Interacts with PDZK1 (via C-terminal PDZ domain). Interacts with CHP1; this interaction increases trafficking and activity at the plasma membrane of SLC9A3. Interacts with CHP2 and SHANK2. Interacts with AHCYL1; the interaction is required for SLC9A3 activity. Interacts with EZR; interaction targets SLC9A3 to the apical membrane. Interacts with SNX27 (via PDZ domains); directs SLC9A3 membrane insertion from early endosomes to the plasma membrane. Phosphorylated by PRKACA at Ser-552 and Ser-605, which inhibits activity. Phosphorylation of Ser-605 is essential for cAMP-mediated inhibition of SLC9A3. Phosphorylation at Ser-661 by SGK1 is associated with increased abundance at the cell membrane. Phosphorylation at Ser-716 by CSNK2A1 regulates SLC9A3 activity through the formation of multiple signaling complexes. In terms of tissue distribution, most abundant in colon and small intestine, followed by kidney and stomach. In kidney, expressed in proximal tubules and outer medulla (at protein level).

The protein localises to the apical cell membrane. Its subcellular location is the cell membrane. The protein resides in the recycling endosome membrane. It is found in the early endosome membrane. The catalysed reaction is Na(+)(in) + H(+)(out) = Na(+)(out) + H(+)(in). Seems to switch between active and inactive modes in response to various stimuli. Activated directly or indirectly by membrane phosphatidylinositol (PIs). Regulated by a variety of auxiliary proteins, which facilitate the maturation, cell surface expression and function of the transporter. Inhibited specifically by the drug tenapanor. Functionally, plasma membrane Na(+)/H(+) antiporter. Exchanges intracellular H(+) ions for extracellular Na(+) in 1:1 stoichiometry, playing a key role in salt and fluid absorption and pH homeostasis. Major apical Na(+)/H(+) exchanger in kidney and intestine playing an important role in renal and intestine Na(+) absorption and blood pressure regulation. The protein is Sodium/hydrogen exchanger 3 (Slc9a3) of Rattus norvegicus (Rat).